We begin with the raw amino-acid sequence, 193 residues long: Thymidine kinase (193 aa).

9-16 is a binding site for ATP; the sequence is AAMNAGKS.

Belongs to the thymidine kinase family.

The catalysed reaction is thymidine + ATP = dTMP + ADP + H(+). In terms of biological role, this thymidine kinase is one of the enzymes that catalyze DNA precursor synthesis. Although tk is a nonessential gene, some strains of host E.coli do not support the growth of phages that lack this gene. This is Thymidine kinase (TK) from Escherichia coli (Bacteriophage T4).